The primary structure comprises 953 residues: UvrABC system protein A (953 aa).

33-40 is an ATP binding site; it reads GLSGSGKS. ABC transporter domains lie at 320-599 and 619-949; these read WGST…EESI and GHDN…RYLK. Position 652-659 (652-659) interacts with ATP; that stretch reads GVSGSGKS. A C4-type zinc finger spans residues 752-778; that stretch reads CEACQGDGLIKIEMHFLPDVYVKCDIC.

Belongs to the ABC transporter superfamily. UvrA family. As to quaternary structure, forms a heterotetramer with UvrB during the search for lesions.

The protein resides in the cytoplasm. Its function is as follows. The UvrABC repair system catalyzes the recognition and processing of DNA lesions. UvrA is an ATPase and a DNA-binding protein. A damage recognition complex composed of 2 UvrA and 2 UvrB subunits scans DNA for abnormalities. When the presence of a lesion has been verified by UvrB, the UvrA molecules dissociate. The protein is UvrABC system protein A of Rickettsia typhi (strain ATCC VR-144 / Wilmington).